The sequence spans 471 residues: 5-hydroxytryptamine receptor 2A (471 aa).

The Extracellular portion of the chain corresponds to 1 to 80 (MEILCEDNIS…LQEKNWSALL (80 aa)). 5 N-linked (GlcNAc...) asparagine glycosylation sites follow: Asn8, Asn38, Asn44, Asn51, and Asn54. Residues 81 to 97 (TTVVIILTIAGNILVIM) form a helical membrane-spanning segment. The Cytoplasmic segment spans residues 98-111 (AVSLEKKLQNATNY). Residues 112–137 (FLMSLAIADMLLGFLVMPVSMLTILY) traverse the membrane as a helical segment. The Extracellular segment spans residues 138–146 (GYRWPLPSK). The helical transmembrane segment at 147–171 (LCAIWIYLDVLFSTASIMHLCAISL) threads the bilayer. Cys148 and Cys227 are disulfide-bonded. Asp155 is a serotonin binding site. The short motif at 172–174 (DRY) is the DRY motif; important for ligand-induced conformation changes element. Residues 172–191 (DRYVAIQNPIHHSRFNSRTK) lie on the Cytoplasmic side of the membrane. The chain crosses the membrane as a helical span at residues 192-215 (AFLKIIAVWTISVGISMPIPVFGL). Topologically, residues 216–232 (QDDSKVFKEGSCLLADD) are extracellular. A helical membrane pass occupies residues 233–258 (NFVLIGSFVAFFIPLTIMVITYFLTI). Over 259–322 (KSLQKEATLC…QSISNEQKAC (64 aa)) the chain is Cytoplasmic. Ser280 bears the Phosphoserine mark. A helical transmembrane segment spans residues 323–348 (KVLGIVFFLFVVMWCPFFITNIMAVI). Asn343 contacts serotonin. Cysteines 349 and 353 form a disulfide. Over 349-356 (CKESCNEN) the chain is Extracellular. Residues 357–382 (VIGALLNVFVWIGYLSSAVNPLVYTL) form a helical membrane-spanning segment. Residues 376–380 (NPLVY) carry the NPxxY motif; important for ligand-induced conformation changes and signaling motif. Residues 383-471 (FNKTYRSAFS…ETVNEKVSCV (89 aa)) are Cytoplasmic-facing. The PDZ-binding motif lies at 469-471 (SCV).

The protein belongs to the G-protein coupled receptor 1 family. Interacts (via C-terminus) with MPDZ and PATJ. May interact (via C-terminus) with MPP3, PRDX6, DLG4, DLG1, CASK, APBA1 and MAGI2. Interacts with GRM2 and DRD2; this may affect signaling. In terms of tissue distribution, detected in adult intestine, especially in mucosal epithelium, longitudinal and circular layers of muscularis externa and myenteric plexuses. Highly expressed in Paneth cells, and detected at lower levels in enterocytes (at protein level). Detected in brain cortex.

The protein resides in the cell membrane. It localises to the cell projection. The protein localises to the axon. It is found in the cytoplasmic vesicle. Its subcellular location is the membrane. The protein resides in the caveola. It localises to the dendrite. The protein localises to the presynapse. With respect to regulation, G-protein coupled receptor activity is regulated by lipids: oleamide increases HTR2A-mediated activity. Its function is as follows. G-protein coupled receptor for 5-hydroxytryptamine (serotonin). Also functions as a receptor for various drugs and psychoactive substances, including mescaline, psilocybin, 1-(2,5-dimethoxy-4-iodophenyl)-2-aminopropane (DOI) and lysergic acid diethylamide (LSD). Ligand binding causes a conformation change that triggers signaling via guanine nucleotide-binding proteins (G proteins) and modulates the activity of downstream effectors. HTR2A is coupled to G(q)/G(11) G alpha proteins and activates phospholipase C-beta, releasing diacylglycerol (DAG) and inositol 1,4,5-trisphosphate (IP3) second messengers that modulate the activity of phosphatidylinositol 3-kinase and promote the release of Ca(2+) ions from intracellular stores, respectively. Beta-arrestin family members inhibit signaling via G proteins and mediate activation of alternative signaling pathways. Affects neural activity, perception, cognition and mood. Plays a role in the regulation of behavior, including responses to anxiogenic situations and psychoactive substances. Plays a role in intestinal smooth muscle contraction, and may play a role in arterial vasoconstriction. The protein is 5-hydroxytryptamine receptor 2A (Htr2a) of Rattus norvegicus (Rat).